Reading from the N-terminus, the 498-residue chain is Cytochrome P450 monooxygenase 71 (498 aa).

The helical transmembrane segment at 7-24 threads the bilayer; it reads YVFALLGILATLYFVRWS. N-linked (GlcNAc...) asparagine glycosylation occurs at asparagine 425. Cysteine 440 serves as a coordination point for heme.

It belongs to the cytochrome P450 family. Heme serves as cofactor.

It is found in the membrane. It participates in secondary metabolite biosynthesis. Its function is as follows. Cytochrome P450 monooxygenase that is able to use dehydroabietic acid and testosterone as substrates for oxidation, suggesting that the natural substrate(s) may be structurally related to steroid compounds. The protein is Cytochrome P450 monooxygenase 71 of Postia placenta (strain ATCC 44394 / Madison 698-R) (Brown rot fungus).